Consider the following 712-residue polypeptide: Polyphosphate kinase (712 aa).

Asn49 contacts ATP. Mg(2+)-binding residues include Arg398 and Arg428. The active-site Phosphohistidine intermediate is the His458. Residues Tyr491, Arg587, and His615 each coordinate ATP.

The protein belongs to the polyphosphate kinase 1 (PPK1) family. Requires Mg(2+) as cofactor. Post-translationally, an intermediate of this reaction is the autophosphorylated ppk in which a phosphate is covalently linked to a histidine residue through a N-P bond.

The catalysed reaction is [phosphate](n) + ATP = [phosphate](n+1) + ADP. Functionally, catalyzes the reversible transfer of the terminal phosphate of ATP to form a long-chain polyphosphate (polyP). The polypeptide is Polyphosphate kinase (Parasynechococcus marenigrum (strain WH8102)).